Consider the following 122-residue polypeptide: MRHYEIVFIVHPDQSEQVPAMIERYKGIVTARGGVIHRVEDWGRRQMAYMIQKLAKAHYVCLNIECDGETLAEIETGFKFNDAVLRHLTVKMKKAETAPSPMMKAVQKEDAAKSHRAEAPAA.

The segment at 97–122 is disordered; that stretch reads TAPSPMMKAVQKEDAAKSHRAEAPAA. Over residues 106–122 the composition is skewed to basic and acidic residues; that stretch reads VQKEDAAKSHRAEAPAA.

Belongs to the bacterial ribosomal protein bS6 family.

Its function is as follows. Binds together with bS18 to 16S ribosomal RNA. This is Small ribosomal subunit protein bS6 from Janthinobacterium sp. (strain Marseille) (Minibacterium massiliensis).